The chain runs to 566 residues: APC membrane recruitment protein 2 (566 aa).

Disordered regions lie at residues 120 to 176, 192 to 237, 277 to 307, and 342 to 533; these read KKNG…PGLI, TQKP…SPCS, VTGC…GKKV, and MIPP…RTKI. 3 stretches are compositionally biased toward basic and acidic residues: residues 123–134, 155–168, and 192–204; these read GKSENVRGEQAE, SKKD…KEGA, and TQKP…KSTE. Basic and acidic residues-rich tracts occupy residues 364–377 and 389–411; these read REVK…DRNA and YRKE…RNSD. Residues 464–476 are compositionally biased toward low complexity; the sequence is PPLSHSHSKPLSP. Polar residues-rich tracts occupy residues 477–489 and 504–517; these read VTTS…ASSN and HTTN…SGSA.

It belongs to the Amer family.

The protein localises to the cell membrane. In terms of biological role, negative regulator of the canonical Wnt signaling pathway involved in neuroectodermal patterning. Acts by specifically binding phosphatidylinositol 4,5-bisphosphate (PtdIns(4,5)P2), translocating to the cell membrane and interacting with key regulators of the canonical Wnt signaling pathway, such as components of the beta-catenin destruction complex. This Xenopus tropicalis (Western clawed frog) protein is APC membrane recruitment protein 2 (amer2).